A 736-amino-acid polypeptide reads, in one-letter code: MTDTLFDRADIDALLAGRHPDPFACLGPHRHDDQIVVRALLPGAERVRALSPDGAELGTLACVDRAGCFAGTIAHDGGAPHYLLSIDWPDAHQVTDDAYAFGTLLDEAALARFSAGDPEAVLDCLGATPVRIDDTDGVRFAVWAPSAQRVSVVGDFNAWDGRRHPMRLRRPSGVWELFVPGIGAGERYKYELCAADGRVLPHKADPCARATEAPPRTASVVADVAALHAFAWHDDGWMHARPRHDDRYRVPWSIYEVHPESWQRIPEQMDRSATWDELAERLIPYVKGMGFTHVEFMPIAEYPFGGSWGYQPLAQFAPSARFGPVEGFARFVDRAHAAGIGVLVDWVPAHFPNDAHGLAQFDGSALYEHADPREGMHPDWNTCVFNVGRTEVSAFLVASALAWARRYHVDGIRVDAVASMLYRDYSRKEGEWVPNVYGGRENLESVAFLRRLNDTLHGDAAPAGVVTVAEESTAWPGVTAPTADGGLGFDFKWNMGWMHDTLAYLHEDPIHRRYHHDRMTFGLVYAFSERFVLPLSHDEVVHGKGSLVAKMPGDAWQRLATLRAYFGFMWAHPGKKLLFMGSEFAQWSEFAHDATPHWDLLDAPAHRGVQRLVRDLNRAYAAEPALHALDCHAAGFAWLIGDDRDNSVFAFARRDDTGRLVVAVCNFTPVPRAGYRLGLPAPGHWRELMNTDAASYGGTNAGNDGAVWAEAVPAHGEAWSASLRLPPLATLWLTPA.

The active-site Nucleophile is aspartate 415. The Proton donor role is filled by glutamate 470.

It belongs to the glycosyl hydrolase 13 family. GlgB subfamily. Monomer.

It catalyses the reaction Transfers a segment of a (1-&gt;4)-alpha-D-glucan chain to a primary hydroxy group in a similar glucan chain.. It participates in glycan biosynthesis; glycogen biosynthesis. In terms of biological role, catalyzes the formation of the alpha-1,6-glucosidic linkages in glycogen by scission of a 1,4-alpha-linked oligosaccharide from growing alpha-1,4-glucan chains and the subsequent attachment of the oligosaccharide to the alpha-1,6 position. This chain is 1,4-alpha-glucan branching enzyme GlgB, found in Burkholderia cenocepacia (strain HI2424).